Consider the following 1228-residue polypeptide: Calcium-transporting ATPase (1228 aa).

Residues 1 to 63 (MEEVIKNAHT…FELILNQFDD (63 aa)) are Cytoplasmic-facing. A helical membrane pass occupies residues 64 to 81 (LLVKILLLAAFISFVLTL). The Extracellular segment spans residues 82–92 (LDMKHKKIEIC). The chain crosses the membrane as a helical span at residues 93–112 (DFIEPLVIVLILILNAAVGV). Residues 113 to 270 (WQECNAEKSL…IDLFGQQLSK (158 aa)) lie on the Cytoplasmic side of the membrane. Residues 271-291 (IIFVICVTVWIINFKHFSDPI) form a helical membrane-spanning segment. At 292 to 300 (HGSFLYGCL) the chain is on the extracellular side. The helical transmembrane segment at 301–321 (YYFKISVALAVAAIPEGLPAV) threads the bilayer. At 322–974 (ITTCLALGTR…IYNNMKAFIR (653 aa)) the chain is on the cytoplasmic side. Catalysis depends on D358, which acts as the 4-aspartylphosphate intermediate. 2 disordered regions span residues 452-478 (MKNDLNNNNNNNNNSSRSGAKRNIPLK) and 562-613 (MPAE…LKNA). A compositionally biased stretch (polar residues) spans 589 to 604 (FFSSKNDNSHITSTLN). K716 lines the ATP pocket. The helical transmembrane segment at 975–994 (YLISSNIGEVASIFITALLG) threads the bilayer. Over 995 to 1000 (IPDSLA) the chain is Extracellular. The chain crosses the membrane as a helical span at residues 1001–1021 (PVQLLWVNLVTDGLPATALGF). Over 1022–1042 (NPPEHDVMKCKPRHKNDNLIN) the chain is Cytoplasmic. The chain crosses the membrane as a helical span at residues 1043 to 1067 (GLTLLRYIIIGTYVGIATVSIFVYW). Residues 1068-1118 (FLFYPDSDMHTLINFYQLSHYNQCKAWNNFRVNKVYDMSEDHCSYFSAGKI) are Extracellular-facing. A helical membrane pass occupies residues 1119–1140 (KASTLSLSVLVLIEMFNALNAL). The Cytoplasmic segment spans residues 1141–1151 (SEYNSLFEIPP). The helical transmembrane segment at 1152–1172 (WRNMYLVLATIGSLLLHVLIL) threads the bilayer. The Extracellular portion of the chain corresponds to 1173–1185 (YIPPLARIFGVVP). A helical membrane pass occupies residues 1186 to 1206 (LSAYDWFLVFLWSFPVIILDE). Residues 1207-1228 (IIKFYAKRKLKEEQRTKKIKID) are Cytoplasmic-facing.

The protein belongs to the cation transport ATPase (P-type) (TC 3.A.3) family.

The protein localises to the membrane. It carries out the reaction Ca(2+)(in) + ATP + H2O = Ca(2+)(out) + ADP + phosphate + H(+). In terms of biological role, this magnesium-dependent enzyme catalyzes the hydrolysis of ATP coupled with the transport of the calcium. The protein is Calcium-transporting ATPase (ATP6) of Plasmodium falciparum (isolate K1 / Thailand).